Reading from the N-terminus, the 283-residue chain is tRNA-cytidine(32) 2-sulfurtransferase (283 aa).

The PP-loop motif motif lies at 32–37 (SGGKDS). C107, C110, and C198 together coordinate [4Fe-4S] cluster.

The protein belongs to the TtcA family. Homodimer. The cofactor is Mg(2+). Requires [4Fe-4S] cluster as cofactor.

The protein resides in the cytoplasm. The enzyme catalyses cytidine(32) in tRNA + S-sulfanyl-L-cysteinyl-[cysteine desulfurase] + AH2 + ATP = 2-thiocytidine(32) in tRNA + L-cysteinyl-[cysteine desulfurase] + A + AMP + diphosphate + H(+). Its pathway is tRNA modification. Its function is as follows. Catalyzes the ATP-dependent 2-thiolation of cytidine in position 32 of tRNA, to form 2-thiocytidine (s(2)C32). The sulfur atoms are provided by the cysteine/cysteine desulfurase (IscS) system. This chain is tRNA-cytidine(32) 2-sulfurtransferase, found in Sorangium cellulosum (strain So ce56) (Polyangium cellulosum (strain So ce56)).